A 266-amino-acid polypeptide reads, in one-letter code: MEILIVNDDGIYSPSLIALYNALKEKFSDANITIVAPTNQQSGIGRAISLFEPLRMTKVKLAKDIVGYAVSGTPTDCVILGIYQILKKVPDLVISGINIGENLGTEIMTSGTLGAAFEAAHHGAKSIASSLQITSDHLKFKELDIPINFEIPAKITAKIAEKYLDYDMPCDVLNINIPENATLETPIEITRLARKMYTTHVEERIDPRGRSYYWIDGYPIFEEEEDTDVYVLRKKRHISITPLTLDTTIKNLDEFKEKYGKILCEM.

4 residues coordinate a divalent metal cation: D8, D9, S42, and N98.

Belongs to the SurE nucleotidase family. Requires a divalent metal cation as cofactor.

Its subcellular location is the cytoplasm. It carries out the reaction a ribonucleoside 5'-phosphate + H2O = a ribonucleoside + phosphate. Functionally, nucleotidase that shows phosphatase activity on nucleoside 5'-monophosphates. In Methanocaldococcus jannaschii (strain ATCC 43067 / DSM 2661 / JAL-1 / JCM 10045 / NBRC 100440) (Methanococcus jannaschii), this protein is 5'-nucleotidase SurE.